We begin with the raw amino-acid sequence, 600 residues long: Torsin-1A-interacting protein 1 (600 aa).

Residues 1–14 show a composition bias toward basic and acidic residues; it reads MAGEGQRAEPEREG. Disordered stretches follow at residues 1–261 and 310–346; these read MAGE…YKES and MRSIYGSFSDDDSVQKSELGNQSPSTSNQQMTGQPKS. The Nuclear portion of the chain corresponds to 1 to 354; sequence MAGEGQRAEP…KSVSSVKTKR (354 aa). At Ser-61 the chain carries Phosphoserine. Basic and acidic residues-rich tracts occupy residues 71 to 81, 91 to 102, and 116 to 125; these read FEPRAAKEKAR, FRPDSAKEEVRE, and RLHEAEEMQT. Phosphoserine occurs at positions 137, 145, 156, 158, 159, and 189. Residues 192–203 are compositionally biased toward low complexity; that stretch reads PLISLRRPPLRS. Residues 219–232 show a composition bias toward acidic residues; it reads EEGETEENDQDSFD. Thr-223 carries the post-translational modification Phosphothreonine. Ser-230, Ser-233, and Ser-244 each carry phosphoserine. Positions 247–261 are enriched in polar residues; the sequence is SGDQTTRSSSQYKES. Ser-322 carries the phosphoserine modification. A Glycyl lysine isopeptide (Lys-Gly) (interchain with G-Cter in SUMO2) cross-link involves residue Lys-325. Positions 325-346 are enriched in polar residues; it reads KSELGNQSPSTSNQQMTGQPKS. Phosphoserine is present on Ser-332. A helical membrane pass occupies residues 355–371; sequence YWPFAVIAALLIGGFLY. Topologically, residues 372-600 are perinuclear space; the sequence is TRPPEAETTA…ENDLKKGICL (229 aa). The segment at 373–600 is interaction with TOR1A; it reads RPPEAETTAV…ENDLKKGICL (228 aa). The stretch at 376–452 forms a coiled coil; it reads EAETTAVQEF…SEQIADAYSS (77 aa). Asn-416 is a glycosylation site (N-linked (GlcNAc...) asparagine).

Belongs to the TOR1AIP family. Interacts with ATP1B4. Interacts with TOR1A (ATP-bound). Interacts with TOR1B, TOR2A and TOR3A. Interacts with VIM.

It is found in the nucleus inner membrane. Required for nuclear membrane integrity. Induces TOR1A and TOR1B ATPase activity and is required for their location on the nuclear membrane. Binds to A- and B-type lamins. Possible role in membrane attachment and assembly of the nuclear lamina. The protein is Torsin-1A-interacting protein 1 (TOR1AIP1) of Bos taurus (Bovine).